Consider the following 316-residue polypeptide: tRNA methyltransferase 10 homolog B (316 aa).

Residues 73–98 (EKIVAAKKSKRKQEKERRKANRVENS) are a coiled coil. The interval 77–96 (AAKKSKRKQEKERRKANRVE) is disordered. In terms of domain architecture, SAM-dependent MTase TRM10-type spans 113–310 (IKERLLEAKH…KGVSSRKGYV (198 aa)).

The protein belongs to the class IV-like SAM-binding methyltransferase superfamily. TRM10 family.

The catalysed reaction is guanosine(9) in tRNA + S-adenosyl-L-methionine = N(1)-methylguanosine(9) in tRNA + S-adenosyl-L-homocysteine + H(+). In terms of biological role, S-adenosyl-L-methionine-dependent guanine N(1)-methyltransferase that catalyzes the formation of N(1)-methylguanine at position 9 (m1G9) in tRNAs. Probably not able to catalyze formation of N(1)-methyladenine at position 9 (m1A9) in tRNAs. This Bos taurus (Bovine) protein is tRNA methyltransferase 10 homolog B (TRMT10B).